The chain runs to 176 residues: Disulfide bond formation protein B (176 aa).

Topologically, residues 1–14 (MLRFLNRCSRGRGA) are cytoplasmic. A helical transmembrane segment spans residues 15–31 (WLLLAFTALALELTALY). The Periplasmic segment spans residues 32 to 49 (FQHVMLLKPCVLCIYQRS). Cysteine 41 and cysteine 44 are oxidised to a cystine. Residues 50–65 (ALWGVFAAGIVGAIAP) form a helical membrane-spanning segment. Residues 66 to 71 (SSLLRY) are Cytoplasmic-facing. A helical membrane pass occupies residues 72 to 89 (PAIALWIYSSYEGIRLAW). Topologically, residues 90-144 (KHTDILLNPSPFTTCDFFVSFPSWLPLDKWLPAIFNATGDCSERQWSFLSMEMPQ) are periplasmic. Cysteine 104 and cysteine 130 form a disulfide bridge. Residues 145–163 (WLLGIFAAYLLIAVLVLIA) form a helical membrane-spanning segment. Residues 164–176 (QPFRSKRRDLFSR) lie on the Cytoplasmic side of the membrane.

Belongs to the DsbB family.

Its subcellular location is the cell inner membrane. Functionally, required for disulfide bond formation in some periplasmic proteins. Acts by oxidizing the DsbA protein. In Pectobacterium atrosepticum (strain SCRI 1043 / ATCC BAA-672) (Erwinia carotovora subsp. atroseptica), this protein is Disulfide bond formation protein B.